The following is a 1032-amino-acid chain: Vacuolar membrane protease (1032 aa).

The Cytoplasmic portion of the chain corresponds to 1–11 (MRFQNPFAFRP). Residues 12–32 (GPVSFWTTVIYLALVIPLIYV) form a helical membrane-spanning segment. The Vacuolar portion of the chain corresponds to 33–426 (HETVPPAPSD…AWAVFALRGL (394 aa)). N-linked (GlcNAc...) asparagine glycans are attached at residues Asn-50 and Asn-142. Residues His-207 and Asp-219 each contribute to the Zn(2+) site. Catalysis depends on Glu-253, which acts as the Proton acceptor. Residues Glu-254, Glu-279, and His-352 each coordinate Zn(2+). Residues 427–447 (FAWSLTLLVATPLILVAITYI) traverse the membrane as a helical segment. At 448 to 482 (LARKDKYYFFSRDIKMHHDINDDPVVLGGWKGFLR) the chain is on the cytoplasmic side. Residues 483–503 (FPFALVFAGALTIASTLLLAK) form a helical membrane-spanning segment. Residues 504–511 (FNPLIIYS) are Vacuolar-facing. A helical transmembrane segment spans residues 512–532 (SPYAVWSMTLSIFYFSFWLIM). Over 533-545 (RGASFIRPSALHR) the chain is Cytoplasmic. A helical transmembrane segment spans residues 546–566 (GYVLIWLFALGWGLQVVGAVA). Over 567–573 (EDRLHIA) the chain is Vacuolar. The chain crosses the membrane as a helical span at residues 574–594 (ALYATVFLQSAVFLALFISLL). Residues 595-708 (EQFALLGKHD…WSGRLPSWTW (114 aa)) are Cytoplasmic-facing. The span at 616-631 (RDISSHGTDHESRPQP) shows a compositional bias: basic and acidic residues. The segment at 616-666 (RDISSHGTDHESRPQPEEEPAQPEGDEDESEDATETTPLRANEPGYGSSTR) is disordered. Positions 632-649 (EEEPAQPEGDEDESEDAT) are enriched in acidic residues. A helical transmembrane segment spans residues 709 to 729 (IIQFLLLAPVPVILFGNLGLV). The Vacuolar portion of the chain corresponds to 730–745 (AMSALQMTGTDGGSLL). The chain crosses the membrane as a helical span at residues 746-766 (VPVLTLGIVSIFLLLPLTPFI). The Cytoplasmic portion of the chain corresponds to 767 to 773 (HRVSHHV). A helical membrane pass occupies residues 774-794 (PMFLLCVFAGTFIYNLVAFPF). Topologically, residues 795–1032 (SDSHRFKFYF…LVEVRKTYKV (238 aa)) are vacuolar. N-linked (GlcNAc...) asparagine glycans are attached at residues Asn-812 and Asn-884.

Belongs to the peptidase M28 family. Zn(2+) serves as cofactor.

It is found in the vacuole membrane. Functionally, may be involved in vacuolar sorting and osmoregulation. This Fusarium vanettenii (strain ATCC MYA-4622 / CBS 123669 / FGSC 9596 / NRRL 45880 / 77-13-4) (Fusarium solani subsp. pisi) protein is Vacuolar membrane protease.